The sequence spans 243 residues: Segregation and condensation protein A (243 aa).

Belongs to the ScpA family. In terms of assembly, component of a cohesin-like complex composed of ScpA, ScpB and the Smc homodimer, in which ScpA and ScpB bind to the head domain of Smc. The presence of the three proteins is required for the association of the complex with DNA.

Its subcellular location is the cytoplasm. Functionally, participates in chromosomal partition during cell division. May act via the formation of a condensin-like complex containing Smc and ScpB that pull DNA away from mid-cell into both cell halves. This chain is Segregation and condensation protein A, found in Staphylococcus epidermidis (strain ATCC 35984 / DSM 28319 / BCRC 17069 / CCUG 31568 / BM 3577 / RP62A).